Here is a 371-residue protein sequence, read N- to C-terminus: Phospho-N-acetylmuramoyl-pentapeptide-transferase (371 aa).

A run of 10 helical transmembrane segments spans residues 25–45 (YLTF…VAMG), 79–99 (TMGG…FADL), 104–124 (VWVV…DDYA), 139–159 (KLIA…IFAP), 179–199 (LVIN…AGFS), 210–230 (GLAI…AYLV), 247–267 (VGEL…FLWY), 274–294 (IFMG…IAVC), 299–319 (LVLG…MIQV), and 348–368 (TVVI…LATL).

Belongs to the glycosyltransferase 4 family. MraY subfamily. Mg(2+) is required as a cofactor.

Its subcellular location is the cell inner membrane. The enzyme catalyses UDP-N-acetyl-alpha-D-muramoyl-L-alanyl-gamma-D-glutamyl-meso-2,6-diaminopimeloyl-D-alanyl-D-alanine + di-trans,octa-cis-undecaprenyl phosphate = di-trans,octa-cis-undecaprenyl diphospho-N-acetyl-alpha-D-muramoyl-L-alanyl-D-glutamyl-meso-2,6-diaminopimeloyl-D-alanyl-D-alanine + UMP. Its pathway is cell wall biogenesis; peptidoglycan biosynthesis. Functionally, catalyzes the initial step of the lipid cycle reactions in the biosynthesis of the cell wall peptidoglycan: transfers peptidoglycan precursor phospho-MurNAc-pentapeptide from UDP-MurNAc-pentapeptide onto the lipid carrier undecaprenyl phosphate, yielding undecaprenyl-pyrophosphoryl-MurNAc-pentapeptide, known as lipid I. This is Phospho-N-acetylmuramoyl-pentapeptide-transferase from Caulobacter sp. (strain K31).